We begin with the raw amino-acid sequence, 618 residues long: 2-succinyl-5-enolpyruvyl-6-hydroxy-3-cyclohexene-1-carboxylate synthase (618 aa).

A disordered region spans residues aspartate 192–aspartate 215.

Belongs to the TPP enzyme family. MenD subfamily. Homodimer. It depends on Mg(2+) as a cofactor. Requires Mn(2+) as cofactor. The cofactor is thiamine diphosphate.

It catalyses the reaction isochorismate + 2-oxoglutarate + H(+) = 5-enolpyruvoyl-6-hydroxy-2-succinyl-cyclohex-3-ene-1-carboxylate + CO2. The protein operates within quinol/quinone metabolism; 1,4-dihydroxy-2-naphthoate biosynthesis; 1,4-dihydroxy-2-naphthoate from chorismate: step 2/7. It functions in the pathway quinol/quinone metabolism; menaquinone biosynthesis. Catalyzes the thiamine diphosphate-dependent decarboxylation of 2-oxoglutarate and the subsequent addition of the resulting succinic semialdehyde-thiamine pyrophosphate anion to isochorismate to yield 2-succinyl-5-enolpyruvyl-6-hydroxy-3-cyclohexene-1-carboxylate (SEPHCHC). This Halorubrum lacusprofundi (strain ATCC 49239 / DSM 5036 / JCM 8891 / ACAM 34) protein is 2-succinyl-5-enolpyruvyl-6-hydroxy-3-cyclohexene-1-carboxylate synthase.